We begin with the raw amino-acid sequence, 739 residues long: Sulfate transporter (739 aa).

Residues 1–44 (MSSENKEQHNLSPRDLPEEAYGFPPELPLGAQRGSSTDLRQFEP) are disordered. The residue at position 12 (S12) is a Phosphoserine. A run of 2 helical transmembrane segments spans residues 112 to 132 (MMSG…YSLL) and 137 to 157 (PIYG…FGTS). N-linked (GlcNAc...) asparagine glycosylation is present at N205. Helical transmembrane passes span 227–247 (FMAG…VSVY) and 255–275 (GFVT…LLGL). N-linked (GlcNAc...) asparagine glycosylation is present at N357. A run of 4 helical transmembrane segments spans residues 378–398 (LIPN…AITV), 420–440 (AIGF…SAAL), 455–475 (LSAI…APLF), and 524–544 (LLST…CVIL). Positions 568–719 (TYKNLRSKSG…YSLSEAVAFA (152 aa)) constitute an STAS domain.

The protein belongs to the SLC26A/SulP transporter (TC 2.A.53) family. In terms of processing, N-glycosylated. As to expression, cartilage and intestine. Expressed in the kidney (at protein level).

Its subcellular location is the cell membrane. It is found in the apical cell membrane. The enzyme catalyses oxalate(in) + sulfate(out) = oxalate(out) + sulfate(in). The catalysed reaction is sulfate(out) + 2 chloride(in) = sulfate(in) + 2 chloride(out). It carries out the reaction oxalate(out) + 2 chloride(in) = oxalate(in) + 2 chloride(out). It catalyses the reaction bromide(in) + chloride(out) = bromide(out) + chloride(in). The enzyme catalyses nitrate(in) + chloride(out) = nitrate(out) + chloride(in). The catalysed reaction is iodide(in) + chloride(out) = iodide(out) + chloride(in). In terms of biological role, sulfate transporter which mediates sulfate uptake into chondrocytes in order to maintain adequate sulfation of proteoglycans which is needed for cartilage development. Mediates electroneutral anion exchange of sulfate ions for oxalate ions, sulfate and oxalate ions for chloride and/or hydroxyl ions and chloride ions for bromide, iodide and nitrate ions. The coupling of sulfate transport to both hydroxyl and chloride ions likely serves to ensure transport at both acidic pH when most sulfate uptake is mediated by sulfate-hydroxide exchange and alkaline pH when most sulfate uptake is mediated by sulfate-chloride exchange. Essential for chondrocyte proliferation, differentiation and cell size expansion. This Rattus norvegicus (Rat) protein is Sulfate transporter (Slc26a2).